Consider the following 344-residue polypeptide: Oxygen sensor histidine kinase NreB (344 aa).

[4Fe-4S] cluster-binding residues include cysteine 58, cysteine 61, cysteine 73, and cysteine 76. Positions 147–344 constitute a Histidine kinase domain; sequence ENERKRISRE…GTIITLDIPI (198 aa). Histidine 158 is subject to Phosphohistidine; by autocatalysis.

[4Fe-4S] cluster is required as a cofactor. Autophosphorylated.

The protein localises to the cytoplasm. It catalyses the reaction ATP + protein L-histidine = ADP + protein N-phospho-L-histidine.. Member of the two-component regulatory system NreB/NreC involved in the control of dissimilatory nitrate/nitrite reduction in response to oxygen. NreB functions as a direct oxygen sensor histidine kinase which is autophosphorylated, in the absence of oxygen, probably at the conserved histidine residue, and transfers its phosphate group probably to a conserved aspartate residue of NreC. NreB/NreC activates the expression of the nitrate (narGHJI) and nitrite (nir) reductase operons, as well as the putative nitrate transporter gene narT. The protein is Oxygen sensor histidine kinase NreB (nreB) of Staphylococcus epidermidis (strain ATCC 12228 / FDA PCI 1200).